The chain runs to 270 residues: Glutamate racemase (270 aa).

Residues 7–8 and 39–40 contribute to the substrate site; these read DS and YG. C70 acts as the Proton donor/acceptor in catalysis. 71–72 provides a ligand contact to substrate; the sequence is NT. The Proton donor/acceptor role is filled by C194. Residue 195 to 196 participates in substrate binding; the sequence is TH.

This sequence belongs to the aspartate/glutamate racemases family.

It carries out the reaction L-glutamate = D-glutamate. It functions in the pathway cell wall biogenesis; peptidoglycan biosynthesis. Functionally, provides the (R)-glutamate required for cell wall biosynthesis. The polypeptide is Glutamate racemase (Cereibacter sphaeroides (strain ATCC 17025 / ATH 2.4.3) (Rhodobacter sphaeroides)).